Here is a 411-residue protein sequence, read N- to C-terminus: MYKGETLFSIPELYPRRKQFVGQSSTRLDQCGLRLGMWYWKDETKSLEFRSFTPAVELKEKGKKGKAVHFAEMDGTASERLTDKRFVPRDEKSAKTLEKRGQQGNVTLDDVKFVALLSLQDTEMQRVCSFTTFMRNKSLDSFLMALLYYLSYYLERLSMEKKPQSYMVGLVEKKEIELVMSKLEDAQKYLAQKYCKLVLGVGMADKHHMNCGKDKISDTQKDWKFFESFYTFCTCIAWIVFRRQYLKEIEEEVGRLFRTNMFNIPRRKREDEESGGEKKRMTLVQFRRMMAKRPAIKKAMDMRSPVLSTLLPSLREKAQHIAEKKYVAGIKLQPRVEKDITNLESVVMPVVGILGEPRNLFNPHTLLPLESEENGKTSGRNSSIVERNNTSIQNTLNLVMSKLTSQNSFPK.

Interacts with PPP1CA.

Inhibits phosphatase activity of protein phosphatase 1 (PP1) complexes. This is Protein phosphatase 1 regulatory subunit 36 (Ppp1r36) from Rattus norvegicus (Rat).